The sequence spans 463 residues: MSQTSISSAPTALTPKVGFVSLGCPKALVDSEQIITQLRAEGYEISGTYDGADLVVVNTCGFIDEAVQESLDAIGEALNENGKVIVTGCLGAKQSASGSNLIEEVHPKVLAVTGPHAVGEVMQAVHSHLPKPHDPFVDLVPAAGVKLTPRHYAYLKISEGCNHRCTFCIIPSMRGDLVSRPVAEVMLEAENLFKSGVKELLVISQDTSAYGVDVKYRTGFWNGKPIKTRMTDLVGALGELAAQYGAWVRLHYVYPYPSVDEVIPMMAEGSFKGHVLPYLDVPFQHAHPEVLKRMKRPANAEKVLERVRAWREICPDLTIRSTFIAGFPGETQEQFETLLDFIREAELDRVGCFAYSPVEGATANELDGALPDEVREARRARFMEVAEQVSAKRMARKVGKTLKVLVDEINPDGGIGRTAADAPEIDGVVYIAPATKASKRYKVGDFVSVKITGADGHDLWGEV.

The region spanning 15–130 is the MTTase N-terminal domain; sequence PKVGFVSLGC…VMQAVHSHLP (116 aa). [4Fe-4S] cluster contacts are provided by C24, C60, C89, C161, C165, and C168. The Radical SAM core domain occupies 147 to 392; sequence LTPRHYAYLK…MEVAEQVSAK (246 aa). The 69-residue stretch at 395-463 folds into the TRAM domain; it reads ARKVGKTLKV…ADGHDLWGEV (69 aa).

Belongs to the methylthiotransferase family. RimO subfamily. It depends on [4Fe-4S] cluster as a cofactor.

It localises to the cytoplasm. It catalyses the reaction L-aspartate(89)-[ribosomal protein uS12]-hydrogen + (sulfur carrier)-SH + AH2 + 2 S-adenosyl-L-methionine = 3-methylsulfanyl-L-aspartate(89)-[ribosomal protein uS12]-hydrogen + (sulfur carrier)-H + 5'-deoxyadenosine + L-methionine + A + S-adenosyl-L-homocysteine + 2 H(+). Functionally, catalyzes the methylthiolation of an aspartic acid residue of ribosomal protein uS12. This Paraburkholderia phymatum (strain DSM 17167 / CIP 108236 / LMG 21445 / STM815) (Burkholderia phymatum) protein is Ribosomal protein uS12 methylthiotransferase RimO.